Here is a 341-residue protein sequence, read N- to C-terminus: Putative methyltransferase YGR283C (341 aa).

The protein belongs to the class IV-like SAM-binding methyltransferase superfamily.

It localises to the nucleus. It is found in the nucleolus. This Saccharomyces cerevisiae (strain ATCC 204508 / S288c) (Baker's yeast) protein is Putative methyltransferase YGR283C.